The primary structure comprises 209 residues: UPF0319 protein VF_1616 (209 aa).

The signal sequence occupies residues M1–A21.

The protein belongs to the UPF0319 family.

The protein is UPF0319 protein VF_1616 of Aliivibrio fischeri (strain ATCC 700601 / ES114) (Vibrio fischeri).